A 154-amino-acid polypeptide reads, in one-letter code: Spermatogenesis-associated protein 19, mitochondrial (154 aa).

A mitochondrion-targeting transit peptide spans 1 to 24 (MIITTWIMYILARKSIGLPFPPRV). Serine 26 and serine 116 each carry phosphoserine.

In terms of tissue distribution, expressed in the testis.

The protein localises to the mitochondrion outer membrane. Its subcellular location is the mitochondrion. It localises to the cell projection. It is found in the cilium. The protein resides in the flagellum. In terms of biological role, essential for sperm motility and male fertility. Plays an important role in sperm motility by regulating the organization and function of the mitochondria and is also required for correct sperm midpiece assembly. This Rattus norvegicus (Rat) protein is Spermatogenesis-associated protein 19, mitochondrial (Spata19).